Here is a 501-residue protein sequence, read N- to C-terminus: Lysine--tRNA ligase (501 aa).

Residues E411 and E418 each coordinate Mg(2+).

The protein belongs to the class-II aminoacyl-tRNA synthetase family. In terms of assembly, homodimer. The cofactor is Mg(2+).

It is found in the cytoplasm. The catalysed reaction is tRNA(Lys) + L-lysine + ATP = L-lysyl-tRNA(Lys) + AMP + diphosphate. The protein is Lysine--tRNA ligase of Shewanella woodyi (strain ATCC 51908 / MS32).